Here is a 272-residue protein sequence, read N- to C-terminus: Hydroxyethylthiazole kinase (272 aa).

Methionine 44 serves as a coordination point for substrate. 2 residues coordinate ATP: lysine 119 and threonine 172. Glycine 199 is a substrate binding site.

The protein belongs to the Thz kinase family. It depends on Mg(2+) as a cofactor.

It catalyses the reaction 5-(2-hydroxyethyl)-4-methylthiazole + ATP = 4-methyl-5-(2-phosphooxyethyl)-thiazole + ADP + H(+). It functions in the pathway cofactor biosynthesis; thiamine diphosphate biosynthesis; 4-methyl-5-(2-phosphoethyl)-thiazole from 5-(2-hydroxyethyl)-4-methylthiazole: step 1/1. Functionally, catalyzes the phosphorylation of the hydroxyl group of 4-methyl-5-beta-hydroxyethylthiazole (THZ). This is Hydroxyethylthiazole kinase from Enterococcus faecalis (strain ATCC 700802 / V583).